A 326-amino-acid polypeptide reads, in one-letter code: MLTLARQQQRQNIRWLLCLSVLMLLALLLSLCAGELWILPGDWFSPRGELFVWQIRLPRTLAVLLVGAALAISGAVMQALFENPLAEPGLLGVSNGAGVGLIAAVLLGQGQLPNWALGLCAIAGALIITLILLRFARRHLSTSRLLLAGVALGIICSALMTWAIYFSTSVDLRQLMYWMMGGFGGVDWRQSWLMLALIPVLLWICCQSRPMNILALGEISARQLGLPLWFWRNVLVAATGWMVGVSVALAGAIGFIGLVIPHILRLCGLTDHRVLLPGCALAGASALLLADIVARLALAAAELPIGVVTATLGAPVFIWLLLKAGR.

Helical transmembrane passes span 19-39 (LSVLMLLALLLSLCAGELWIL), 61-81 (LAVLLVGAALAISGAVMQALF), 88-108 (PGLLGVSNGAGVGLIAAVLLG), 112-132 (LPNWALGLCAIAGALIITLIL), 146-166 (LLAGVALGIICSALMTWAIYF), 184-204 (GGVDWRQSWLMLALIPVLLWI), 240-260 (GWMVGVSVALAGAIGFIGLVI), 274-294 (VLLPGCALAGASALLLADIVA), and 302-322 (ELPIGVVTATLGAPVFIWLLL).

Belongs to the binding-protein-dependent transport system permease family. FecCD subfamily. The complex is composed of two ATP-binding proteins (BtuD), two transmembrane proteins (BtuC) and a solute-binding protein (BtuF).

The protein resides in the cell inner membrane. Its function is as follows. Part of the ABC transporter complex BtuCDF involved in vitamin B12 import. Involved in the translocation of the substrate across the membrane. This chain is Vitamin B12 import system permease protein BtuC, found in Escherichia coli O127:H6 (strain E2348/69 / EPEC).